The sequence spans 595 residues: Solute carrier family 13 member 1 (595 aa).

5 helical membrane passes run 13 to 33 (FLFVVFTVLVLLPLPIVLHTK), 41 to 61 (LFVVATFWLTEALPLSVTALL), 77 to 97 (VASAYFKDFHLLLIGVICLAT), 108 to 128 (IALKMVMMVGVNPAWLTLGFM), and 131 to 151 (TAFLSMWLSNTSTAAMVMPIA). N-linked (GlcNAc...) asparagine glycans are attached at residues asparagine 174 and asparagine 207. The next 8 membrane-spanning stretches (helical) occupy residues 239-259 (LTCLCIAYSSTIGGLTTITGT), 290-310 (PAALIILLLSWIWLQWLFLGF), 348-368 (IVTLVLFIIMALLWFSRDPGF), 381-401 (GFATDSTVALLIGLLFFLIPA), 464-484 (PLGSLPAWLIILISSLMVTSL), 491-511 (PATITLFLPILSPLAEAIHVN), 512-532 (PLYILIPSTLCTSFAFLLPVA), and 554-574 (GLGVNIVGVAVVMLGICTWIV). Asparagine 591 is a glycosylation site (N-linked (GlcNAc...) asparagine).

This sequence belongs to the SLC13A/DASS transporter (TC 2.A.47) family. NADC subfamily. In terms of tissue distribution, highly expressed in kidney; not detectable in the other tissues tested.

It localises to the apical cell membrane. It catalyses the reaction sulfate(out) + 3 Na(+)(out) = sulfate(in) + 3 Na(+)(in). The enzyme catalyses selenate(out) + 3 Na(+)(out) = selenate(in) + 3 Na(+)(in). It carries out the reaction thiosulfate(out) + 3 Na(+)(out) = thiosulfate(in) + 3 Na(+)(in). Inhibited by thiosulfate, selenate, molybdate, tungstate, citrate and succinate. In terms of biological role, sodium:sulfate symporter that mediates sulfate reabsorption in the kidney and small intestine. Can also mediate the transport of selenate and thiosulfate. This is Solute carrier family 13 member 1 (SLC13A1) from Homo sapiens (Human).